The primary structure comprises 1024 residues: Eukaryotic translation initiation factor 3 subunit A (1024 aa).

A PCI domain is found at 331–508 (VISSNAPGTG…QAITFQDDVF (178 aa)). 2 coiled-coil regions span residues 575–717 (AAED…REEA) and 777–889 (KRRG…RRSR). Basic and acidic residues-rich tracts occupy residues 797–866 (KERR…ERRA) and 873–886 (DKQR…EANR). Disordered stretches follow at residues 797 to 973 (KERR…GAYR) and 1001 to 1024 (AAAA…GRRA). Low complexity-rich tracts occupy residues 890–906 (AAGT…AADA) and 946–971 (KEAA…SSGA).

The protein belongs to the eIF-3 subunit A family. Component of the eukaryotic translation initiation factor 3 (eIF-3) complex.

It is found in the cytoplasm. Its function is as follows. RNA-binding component of the eukaryotic translation initiation factor 3 (eIF-3) complex, which is involved in protein synthesis of a specialized repertoire of mRNAs and, together with other initiation factors, stimulates binding of mRNA and methionyl-tRNAi to the 40S ribosome. The eIF-3 complex specifically targets and initiates translation of a subset of mRNAs involved in cell proliferation. The sequence is that of Eukaryotic translation initiation factor 3 subunit A from Mycosarcoma maydis (Corn smut fungus).